The sequence spans 254 residues: Ribonuclease HII (254 aa).

Positions 70–254 (TCIAGIDEAG…SFAPVKSVIS (185 aa)) constitute an RNase H type-2 domain. 3 residues coordinate a divalent metal cation: D76, E77, and D168.

This sequence belongs to the RNase HII family. It depends on Mn(2+) as a cofactor. Mg(2+) is required as a cofactor.

The protein localises to the cytoplasm. The catalysed reaction is Endonucleolytic cleavage to 5'-phosphomonoester.. Endonuclease that specifically degrades the RNA of RNA-DNA hybrids. The chain is Ribonuclease HII from Bacillus pumilus (strain SAFR-032).